The following is a 177-amino-acid chain: Cell division protein ZapC (177 aa).

This sequence belongs to the ZapC family. In terms of assembly, interacts directly with FtsZ.

The protein localises to the cytoplasm. Its function is as follows. Contributes to the efficiency of the cell division process by stabilizing the polymeric form of the cell division protein FtsZ. Acts by promoting interactions between FtsZ protofilaments and suppressing the GTPase activity of FtsZ. This Shewanella frigidimarina (strain NCIMB 400) protein is Cell division protein ZapC.